An 861-amino-acid polypeptide reads, in one-letter code: MSSPAVETKVPASPDVTAEVIPAPPSSHRPLPFGLRPGKLVIVGSGIGSIGQFTLSAVAHIEQADRVFFVVADPATEAFIYSKNKNSVDLYKFYDDKKPRMDTYIQMAEVMLRELRKGYSVVGVIYGHPGVFVTPSHRAISIARDEGYSAKMLPGVSAEDNLFADIGIDPSRPGCLTYEATDLLLRNRTLVPSSHLVLFQVGCIGLSDFRFKGFDNINFDVLLDRLEQVYGPDHAVIHYMAAVLPQSTTTIDRYTIKELRDPVIKKRITAISTFYLPPKALSPLHEESAAKLGLMKAGYKILDGAQAPYPPFPWAGPNVPIGIAYGRRELAAVAKLDSHVPPANYKPLRASNAMKSTMIKLATDPKAFAQYSRNPALLANSTPGLTTPERKALQTGSQGLVRSVMKTSPEDVAKQFVQAELRDPTLAKQYSQECYDQTGNTDGIAVISAWLKSKGYDTTPTAINDAWADMQANSLDVYQSTYNTMVDGKSGPAITIKSGVVYIGNTVVKKFAFSKSVLTWSSTDGNPSSATLSFVVLTDDDGQPLPANSYIGPQFTGFYWTSGAKPAAANTLGRNGAFPSGGGGGSGGGGGSSSQGADISTWVDSYQTYVVTTAGSWKDEDILKIDDDTAHTITYGPLKIVKYSLSNDTVSWSATDGNPFNAVIFFKVNKPTKANPTAGNQFVGKKWLPSDPAPAAVNWTGLIGSTADPKGTAAANATASMWKSIGINLGVAVSAMVLGTAVIKAIGAAWDKGSAAWKAAKAAADKAKKDAEAAEKDSAVDDEKFADEEPPDLEELPIPDADPLVDVTDVDVTDVDVTDVDVTDVDVTDVDVTDVDVTDVDVTDVDVTDVDVVDVLDVVVI.

A methyltransferase domain region spans residues 1–279; it reads MSSPAVETKV…AISTFYLPPK (279 aa). Catalysis depends on residues Arg-100, Tyr-104, and Tyr-126. Positions 126, 128, 131, 158, 200, 241, 272, and 273 each coordinate S-adenosyl-L-methionine. A clasp domain region spans residues 280 to 408; that stretch reads ALSPLHEESA…GLVRSVMKTS (129 aa). Positions 409-799 are type III-specific C-terminal domain; sequence PEDVAKQFVQ…PPDLEELPIP (391 aa). Disordered regions lie at residues 575 to 596 and 772 to 801; these read NGAF…SSQG and EAAE…IPDA. Positions 579-593 are enriched in gly residues; that stretch reads PSGGGGGSGGGGGSS. Residues 772 to 783 show a composition bias toward basic and acidic residues; it reads EAAEKDSAVDDE. Residues 784-797 show a composition bias toward acidic residues; sequence KFADEEPPDLEELP. N-methylvaline occurs at positions 805 and 807. 9 repeat units span residues 805–809, 810–814, 815–819, 820–824, 825–829, 830–834, 835–839, 840–844, and 845–849. Residues 805–854 are 10 X 5 AA tandem repeats of VDVTD; it reads VDVTDVDVTDVDVTDVDVTDVDVTDVDVTDVDVTDVDVTDVDVTDVDVVD. Thr-808 bears the N-methylthreonine mark. N-methylvaline is present on residues Val-810 and Val-812. An N-methylthreonine modification is found at Thr-813. N-methylvaline is present on residues Val-815 and Val-817. Thr-818 is subject to N-methylthreonine. 2 positions are modified to N-methylvaline: Val-820 and Val-822. An N-methylthreonine modification is found at Thr-823. 2 positions are modified to N-methylvaline: Val-825 and Val-827. An N-methylthreonine modification is found at Thr-828. N-methylvaline occurs at positions 830 and 832. Thr-833 carries the N-methylthreonine modification. Residues 850-854 form a 10; approximate repeat; the sequence is VDVVD.

It in the N-terminal section; belongs to the precorrin methyltransferase family. Post-translationally, aboMA automethylates at Val-805, Val-807, Thr-808, Val-810, Val-812, Thr-813, Val-815, Val-817, Thr-818, Val-820, Val-822, Thr-823, Val-825, Val-827 and Thr-828, Val-830, Val-832 and T-833 before being processed by a prolyloligopeptidase which likely forms a peptidyl ester upon removal of the follower propeptide, which then undergoes macrocyclization with the N-terminus of the modified core peptide. Peptide backbone alpha-N-methylations change the physicochemical properties of amide bonds to provide structural constraints and other favorable characteristics including biological membrane permeability to peptides.

The protein operates within secondary metabolite biosynthesis. Its function is as follows. Fusion protein of the methyltransferase aboM and a type III borosin core peptide; part of the gene cluster that mediates the biosynthesis of a type III borosin, a highly methylated cyclic peptide with potent biological activities. Type III borosins derive from the C-terminus of the fusion protein, and it is the same protein that methylates its own C-terminus using S-adenosyl methionine (SAM). The C-terminus is subsequently cleaved off and macrocyclized by a prolyloligopeptidase to give the final product. The chain is Methyltransferase/ribosomally synthesized type III borosin cyclic peptide precursor aboMAa from Anomoporia bombycina (Polyporus bombycinus).